Here is a 164-residue protein sequence, read N- to C-terminus: V-type proton ATPase 16 kDa proteolipid subunit (164 aa).

Topologically, residues 1–9 (MSNFAGDET) are lumenal. A helical transmembrane segment spans residues 10–32 (APFFGFLGAAAALVFSCMGAAYG). Over 33–54 (TAKSGVGVASMGVMRPELVMKS) the chain is Cytoplasmic. Residues 55–75 (IVPVVMAGVLGIYGLIIAVII) form a helical membrane-spanning segment. At 76–94 (STGINPKTKSYYLFDGYAH) the chain is on the lumenal side. Residues 95–116 (LSSGLACGLAGLSAGMAIGIVG) traverse the membrane as a helical segment. The Cytoplasmic segment spans residues 117 to 128 (DAGVRANAQQPK). Residues 129–154 (LFVGMILILIFAEALALYGLIVGIIL) form a helical membrane-spanning segment. Topologically, residues 155 to 164 (SSRAGQSRAE) are lumenal.

The protein belongs to the V-ATPase proteolipid subunit family. V-ATPase is a heteromultimeric enzyme composed of a peripheral catalytic V1 complex (main components: subunits A, B, C, D, E, and F) attached to an integral membrane V0 proton pore complex (main component: the proteolipid protein; which is present as a hexamer that forms the proton-conducting pore).

It is found in the vacuole membrane. Functionally, proton-conducting pore forming subunit of the membrane integral V0 complex of vacuolar ATPase. V-ATPase is responsible for acidifying a variety of intracellular compartments in eukaryotic cells. This is V-type proton ATPase 16 kDa proteolipid subunit from Solanum lycopersicum (Tomato).